We begin with the raw amino-acid sequence, 469 residues long: Putative multidrug resistance protein MdtD (469 aa).

Helical transmembrane passes span 8 to 28 (LWIV…VNTA), 45 to 65 (SVIV…GWLA), 68 to 88 (VGVK…SLLC), 102 to 122 (VIQG…VMKI), 134 to 154 (FVTL…GFLV), 161 to 181 (WIFL…LWLM), 191 to 211 (FDIS…LALD), 215 to 235 (GLGL…LALA), 263 to 283 (LIGS…TPVF), 286 to 306 (IGLG…IIGS), 338 to 358 (LSFP…VLFF), 392 to 412 (MVMQ…LGVF), and 426 to 446 (SAFL…ALIF).

This sequence belongs to the major facilitator superfamily. TCR/Tet family.

Its subcellular location is the cell inner membrane. The sequence is that of Putative multidrug resistance protein MdtD from Yersinia enterocolitica serotype O:8 / biotype 1B (strain NCTC 13174 / 8081).